A 747-amino-acid polypeptide reads, in one-letter code: DNA-directed RNA polymerase subunit beta' (747 aa).

Residues Cys70, Cys72, Cys97, and Cys100 each contribute to the Zn(2+) site. Residues Asp502, Asp504, and Asp506 each contribute to the Mg(2+) site.

It belongs to the RNA polymerase beta' chain family. RpoC1 subfamily. In terms of assembly, in plastids the minimal PEP RNA polymerase catalytic core is composed of four subunits: alpha, beta, beta', and beta''. When a (nuclear-encoded) sigma factor is associated with the core the holoenzyme is formed, which can initiate transcription. Mg(2+) serves as cofactor. It depends on Zn(2+) as a cofactor.

The protein localises to the plastid. It localises to the chloroplast. It catalyses the reaction RNA(n) + a ribonucleoside 5'-triphosphate = RNA(n+1) + diphosphate. DNA-dependent RNA polymerase catalyzes the transcription of DNA into RNA using the four ribonucleoside triphosphates as substrates. The chain is DNA-directed RNA polymerase subunit beta' from Gnetum parvifolium (Small-leaved jointfir).